The primary structure comprises 120 residues: MMTGRQGRATFQFLPDEARSLPPPKLTDPRLAFVGFLGYCSGLIDNAIRRRPVLLAGLHRQLLYITSFVFVGYYLLKRQDYMYAVRDHDMFSYIKSHPEDFPEKDKKTYGEVFEEFHPVR.

Position 1 is an N-acetylmethionine (methionine 1). A helical transmembrane segment spans residues 57–76; it reads GLHRQLLYITSFVFVGYYLL.

This sequence belongs to the complex I NDUFC2 subunit family. In terms of assembly, complex I is composed of 45 different subunits. Interacts with TMEM242. Post-translationally, there is a minor unacetylated form of subunit B14.5b.

The protein resides in the mitochondrion inner membrane. Functionally, accessory subunit of the mitochondrial membrane respiratory chain NADH dehydrogenase (Complex I), that is believed not to be involved in catalysis but required for the complex assembly. Complex I functions in the transfer of electrons from NADH to the respiratory chain. The immediate electron acceptor for the enzyme is believed to be ubiquinone. The polypeptide is NADH dehydrogenase [ubiquinone] 1 subunit C2 (Bos taurus (Bovine)).